The chain runs to 141 residues: Nucleoside diphosphate kinase (141 aa).

Lys-11, Phe-59, Arg-87, Thr-93, Arg-104, and Asn-114 together coordinate ATP. Residue His-117 is the Pros-phosphohistidine intermediate of the active site.

This sequence belongs to the NDK family. Homotetramer. It depends on Mg(2+) as a cofactor.

It is found in the cytoplasm. The catalysed reaction is a 2'-deoxyribonucleoside 5'-diphosphate + ATP = a 2'-deoxyribonucleoside 5'-triphosphate + ADP. The enzyme catalyses a ribonucleoside 5'-diphosphate + ATP = a ribonucleoside 5'-triphosphate + ADP. Major role in the synthesis of nucleoside triphosphates other than ATP. The ATP gamma phosphate is transferred to the NDP beta phosphate via a ping-pong mechanism, using a phosphorylated active-site intermediate. This is Nucleoside diphosphate kinase from Burkholderia multivorans (strain ATCC 17616 / 249).